A 254-amino-acid chain; its full sequence is uncharacterized protein (254 aa).

This is an uncharacterized protein from Methanocaldococcus jannaschii (strain ATCC 43067 / DSM 2661 / JAL-1 / JCM 10045 / NBRC 100440) (Methanococcus jannaschii).